A 446-amino-acid polypeptide reads, in one-letter code: Phosphoglucosamine mutase (446 aa).

The active-site Phosphoserine intermediate is Ser-102. Residues Ser-102, Asp-239, Asp-241, and Asp-243 each coordinate Mg(2+). Position 102 is a phosphoserine (Ser-102).

The protein belongs to the phosphohexose mutase family. Requires Mg(2+) as cofactor. Activated by phosphorylation.

It catalyses the reaction alpha-D-glucosamine 1-phosphate = D-glucosamine 6-phosphate. In terms of biological role, catalyzes the conversion of glucosamine-6-phosphate to glucosamine-1-phosphate. The polypeptide is Phosphoglucosamine mutase (Solibacter usitatus (strain Ellin6076)).